The chain runs to 136 residues: Beta-hordothionin (136 aa).

A signal peptide spans 1–27 (MGSKGLKGVMVCLLILGLVLEHVQVEG). Disulfide bonds link Cys-30-Cys-66, Cys-31-Cys-58, Cys-39-Cys-56, and Cys-43-Cys-52. Positions 73 to 136 (LALVSNSDEP…GDVGLTSLTA (64 aa)) are cleaved as a propeptide — acidic domain.

Belongs to the plant thionin (TC 1.C.44) family. 4 C-C subfamily. As to quaternary structure, homodimer.

It is found in the secreted. Thionins are small plant proteins which are toxic to animal cells. They seem to exert their toxic effect at the level of the cell membrane. Their precise function is not known. This chain is Beta-hordothionin (THI1.2), found in Hordeum vulgare (Barley).